The primary structure comprises 77 residues: Large ribosomal subunit protein eL20 (77 aa).

This sequence belongs to the eukaryotic ribosomal protein eL20 family. As to quaternary structure, part of the 50S ribosomal subunit. Binds 23S rRNA.

The sequence is that of Large ribosomal subunit protein eL20 from Thermococcus kodakarensis (strain ATCC BAA-918 / JCM 12380 / KOD1) (Pyrococcus kodakaraensis (strain KOD1)).